The chain runs to 366 residues: Peroxisomal (S)-2-hydroxy-acid oxidase GLO4 (366 aa).

Residues 1–360 (MEDNLPVNVR…TRSHVMTEGD (360 aa)) form the FMN hydroxy acid dehydrogenase domain. A 2-oxocarboxylate is bound at residue tyrosine 27. FMN contacts are provided by residues 80–82 (PTG), serine 109, 130–132 (QLY), and threonine 158. Tyrosine 132 contacts a 2-oxocarboxylate. Arginine 167 provides a ligand contact to a 2-oxocarboxylate. FMN contacts are provided by lysine 231 and serine 253. The Proton acceptor role is filled by histidine 255. Arginine 258 lines the a 2-oxocarboxylate pocket. FMN contacts are provided by residues 286-290 (DGGIR) and 309-310 (XX). Residues 364–366 (SLL) carry the Microbody targeting signal motif.

It belongs to the FMN-dependent alpha-hydroxy acid dehydrogenase family. Homotetramer. The cofactor is FMN.

Its subcellular location is the peroxisome. It catalyses the reaction a (2S)-2-hydroxycarboxylate + O2 = a 2-oxocarboxylate + H2O2. The protein operates within lipid metabolism; fatty acid metabolism. Its function is as follows. Oxidase that catalyzes the oxidation of a broad range of 2-hydroxyacids to the corresponding 2-oxoacids, with a reduction of O2 to H2O2. May be involved in a general medium- and long-chain fatty acid catabolic pathway such as alpha-oxidation. This is Peroxisomal (S)-2-hydroxy-acid oxidase GLO4 (GLO4) from Oryza sativa subsp. indica (Rice).